The chain runs to 463 residues: Alpha-L-arabinofuranosidase B (463 aa).

Positions 1–26 are cleaved as a signal peptide; the sequence is MIPQLNRNYAWAIALGLVARSSLVSA. The interval 27-308 is catalytic; the sequence is GPCDIYASGG…ILGIGGHNSK (282 aa). A disulfide bridge links Cys29 with Cys39. Asn81 is a glycosylation site (N-linked (GlcNAc...) asparagine). 2 cysteine pairs are disulfide-bonded: Cys89-Cys94 and Cys184-Cys185. Asp227 serves as a coordination point for substrate. Glu229 acts as the Nucleophile in catalysis. Substrate is bound at residue Asn230. Residue Asn280 is glycosylated (N-linked (GlcNAc...) asparagine). Gly304 lines the substrate pocket. Residues 309 to 463 form an ABD region; sequence LTVGSSISLR…VSWVVSASFA (155 aa). Asn332 carries N-linked (GlcNAc...) asparagine glycosylation. Cys366 and Cys404 are oxidised to a cystine. Residues His381, Asn383, Phe384, His428, Asp430, Leu433, and Asp453 each contribute to the substrate site.

The protein belongs to the glycosyl hydrolase 54 family. In terms of processing, residue Asn-280 is mannosylated with up to 7 mannose residues.

It is found in the secreted. The catalysed reaction is Hydrolysis of terminal non-reducing alpha-L-arabinofuranoside residues in alpha-L-arabinosides.. It functions in the pathway glycan metabolism; L-arabinan degradation. Functionally, secreted alpha-L-arabinofuranosidase that actively hydrolyzes p-NP-alpha-L-arabinofuranoside and is specific for furanose configuration of the carbohydrate ring. Also exhibits significant activity against polymeric arabinose-containing substrates such as arabinan and arabinoxylan, a major component of plant hemicellulose. This is Alpha-L-arabinofuranosidase B (abfB) from Penicillium canescens.